The sequence spans 354 residues: Holliday junction branch migration complex subunit RuvB (354 aa).

The interval 1–24 (MSIQTDDFAPVPPPKRVVSAAPTS) is disordered. The interval 5–195 (TDDFAPVPPP…FGIVARLEFY (191 aa)) is large ATPase domain (RuvB-L). ATP is bound by residues Leu-34, Arg-35, Gly-76, Lys-79, Thr-80, Thr-81, 142–144 (EDY), Arg-185, Tyr-195, and Arg-232. Residue Thr-80 participates in Mg(2+) binding. The interval 196 to 266 (TPEELSRIVT…IAQRALAMLD (71 aa)) is small ATPAse domain (RuvB-S). A head domain (RuvB-H) region spans residues 269 to 354 (PQGFDVMDRK…RQHTDLFGPA (86 aa)). Arg-324 and Arg-329 together coordinate DNA.

It belongs to the RuvB family. Homohexamer. Forms an RuvA(8)-RuvB(12)-Holliday junction (HJ) complex. HJ DNA is sandwiched between 2 RuvA tetramers; dsDNA enters through RuvA and exits via RuvB. An RuvB hexamer assembles on each DNA strand where it exits the tetramer. Each RuvB hexamer is contacted by two RuvA subunits (via domain III) on 2 adjacent RuvB subunits; this complex drives branch migration. In the full resolvosome a probable DNA-RuvA(4)-RuvB(12)-RuvC(2) complex forms which resolves the HJ.

The protein resides in the cytoplasm. The catalysed reaction is ATP + H2O = ADP + phosphate + H(+). Its function is as follows. The RuvA-RuvB-RuvC complex processes Holliday junction (HJ) DNA during genetic recombination and DNA repair, while the RuvA-RuvB complex plays an important role in the rescue of blocked DNA replication forks via replication fork reversal (RFR). RuvA specifically binds to HJ cruciform DNA, conferring on it an open structure. The RuvB hexamer acts as an ATP-dependent pump, pulling dsDNA into and through the RuvAB complex. RuvB forms 2 homohexamers on either side of HJ DNA bound by 1 or 2 RuvA tetramers; 4 subunits per hexamer contact DNA at a time. Coordinated motions by a converter formed by DNA-disengaged RuvB subunits stimulates ATP hydrolysis and nucleotide exchange. Immobilization of the converter enables RuvB to convert the ATP-contained energy into a lever motion, pulling 2 nucleotides of DNA out of the RuvA tetramer per ATP hydrolyzed, thus driving DNA branch migration. The RuvB motors rotate together with the DNA substrate, which together with the progressing nucleotide cycle form the mechanistic basis for DNA recombination by continuous HJ branch migration. Branch migration allows RuvC to scan DNA until it finds its consensus sequence, where it cleaves and resolves cruciform DNA. In Paracidovorax citrulli (strain AAC00-1) (Acidovorax citrulli), this protein is Holliday junction branch migration complex subunit RuvB.